The chain runs to 338 residues: UDP-3-O-acylglucosamine N-acyltransferase (338 aa).

The Proton acceptor role is filled by His-239.

The protein belongs to the transferase hexapeptide repeat family. LpxD subfamily. As to quaternary structure, homotrimer.

It carries out the reaction a UDP-3-O-[(3R)-3-hydroxyacyl]-alpha-D-glucosamine + a (3R)-hydroxyacyl-[ACP] = a UDP-2-N,3-O-bis[(3R)-3-hydroxyacyl]-alpha-D-glucosamine + holo-[ACP] + H(+). It functions in the pathway bacterial outer membrane biogenesis; LPS lipid A biosynthesis. Catalyzes the N-acylation of UDP-3-O-acylglucosamine using 3-hydroxyacyl-ACP as the acyl donor. Is involved in the biosynthesis of lipid A, a phosphorylated glycolipid that anchors the lipopolysaccharide to the outer membrane of the cell. The chain is UDP-3-O-acylglucosamine N-acyltransferase from Thermosynechococcus vestitus (strain NIES-2133 / IAM M-273 / BP-1).